The following is a 71-amino-acid chain: Delta-actitoxin-Avd2b 2 (71 aa).

The N-terminal stretch at 1 to 20 (MNRLLVFLMLGAAFMLVVSA) is a signal peptide. The propeptide occupies 21-41 (NDAYGDEPAFKDLNQGDESLG). 3 disulfide bridges follow: cysteine 46-cysteine 61, cysteine 47-cysteine 55, and cysteine 49-cysteine 66.

Belongs to the sea anemone short toxin (type III) family.

The protein resides in the secreted. Its subcellular location is the nematocyst. Its function is as follows. Voltage-gated sodium channel (Nav) inhibitor. 1 uM completely inhibits insect voltage-gated sodium channel inactivation (DmNav1 from D.melanogaster). This is Delta-actitoxin-Avd2b 2 from Anemonia viridis (Snakelocks anemone).